A 272-amino-acid polypeptide reads, in one-letter code: Cell division protein ZipA (272 aa).

The Periplasmic segment spans residues 1-4 (METH). Residues 5-25 (ILFFILAGLLIAVLIGYSIWS) traverse the membrane as a helical segment. At 26–272 (ARREKSRIFS…RQNYLLRVAN (247 aa)) the chain is on the cytoplasmic side.

Belongs to the ZipA family. As to quaternary structure, interacts with FtsZ via their C-terminal domains.

Its subcellular location is the cell inner membrane. Its function is as follows. Essential cell division protein that stabilizes the FtsZ protofilaments by cross-linking them and that serves as a cytoplasmic membrane anchor for the Z ring. Also required for the recruitment to the septal ring of downstream cell division proteins. This Glaesserella parasuis serovar 5 (strain SH0165) (Haemophilus parasuis) protein is Cell division protein ZipA.